Consider the following 384-residue polypeptide: Dimethyladenosine transferase (384 aa).

Positions 1 to 24 are disordered; it reads MPKTAKNKRNNAASGPYDKKSKGS. Residues His39, Leu41, Gly66, Glu87, Asp115, and Asn131 each coordinate S-adenosyl-L-methionine. A disordered region spans residues 289-309; that stretch reads MDANSDTDNDNDGDAMEEDDD.

Belongs to the class I-like SAM-binding methyltransferase superfamily. rRNA adenine N(6)-methyltransferase family.

It is found in the cytoplasm. The protein resides in the nucleus. The protein localises to the nucleolus. It catalyses the reaction adenosine(1779)/adenosine(1780) in 18S rRNA + 4 S-adenosyl-L-methionine = N(6)-dimethyladenosine(1779)/N(6)-dimethyladenosine(1780) in 18S rRNA + 4 S-adenosyl-L-homocysteine + 4 H(+). Specifically dimethylates two adjacent adenosines in the loop of a conserved hairpin near the 3'-end of 18S rRNA in the 40S particle. The chain is Dimethyladenosine transferase (DIM1) from Chaetomium thermophilum (strain DSM 1495 / CBS 144.50 / IMI 039719) (Thermochaetoides thermophila).